The primary structure comprises 450 residues: Eukaryotic translation initiation factor 3 subunit E (450 aa).

Residues 255–424 (TELFFSPAYI…GTVIMNHPPQ (170 aa)) enclose the PCI domain.

The protein belongs to the eIF-3 subunit E family. In terms of assembly, component of the eukaryotic translation initiation factor 3 (eIF-3) complex.

It is found in the cytoplasm. Functionally, component of the eukaryotic translation initiation factor 3 (eIF-3) complex, which is involved in protein synthesis of a specialized repertoire of mRNAs and, together with other initiation factors, stimulates binding of mRNA and methionyl-tRNAi to the 40S ribosome. The eIF-3 complex specifically targets and initiates translation of a subset of mRNAs involved in cell proliferation. The polypeptide is Eukaryotic translation initiation factor 3 subunit E (int6) (Aspergillus clavatus (strain ATCC 1007 / CBS 513.65 / DSM 816 / NCTC 3887 / NRRL 1 / QM 1276 / 107)).